The chain runs to 326 residues: Beta-ketoacyl-[acyl-carrier-protein] synthase III 2 (326 aa).

Catalysis depends on residues cysteine 114 and histidine 251. An ACP-binding region spans residues 252–256; it reads SANAR. Asparagine 281 is a catalytic residue.

This sequence belongs to the thiolase-like superfamily. FabH family. In terms of assembly, homodimer.

Its subcellular location is the cytoplasm. It carries out the reaction malonyl-[ACP] + acetyl-CoA + H(+) = 3-oxobutanoyl-[ACP] + CO2 + CoA. It participates in lipid metabolism; fatty acid biosynthesis. Its function is as follows. Catalyzes the condensation reaction of fatty acid synthesis by the addition to an acyl acceptor of two carbons from malonyl-ACP. Catalyzes the first condensation reaction which initiates fatty acid synthesis and may therefore play a role in governing the total rate of fatty acid production. Possesses both acetoacetyl-ACP synthase and acetyl transacylase activities. Its substrate specificity determines the biosynthesis of branched-chain and/or straight-chain of fatty acids. This is Beta-ketoacyl-[acyl-carrier-protein] synthase III 2 from Staphylococcus epidermidis (strain ATCC 12228 / FDA PCI 1200).